The sequence spans 359 residues: Glycerol-1-phosphate dehydrogenase [NAD(P)+] (359 aa).

Residues Gly-107 to Asp-111 and Thr-129 to Ser-132 each bind NAD(+). Asp-134 contacts substrate. Ser-138 lines the NAD(+) pocket. Asp-181 lines the substrate pocket. Asp-181 and His-261 together coordinate Zn(2+). Residue His-265 participates in substrate binding. Residue His-277 coordinates Zn(2+).

Belongs to the glycerol-1-phosphate dehydrogenase family. Zn(2+) serves as cofactor.

The protein localises to the cytoplasm. The catalysed reaction is sn-glycerol 1-phosphate + NAD(+) = dihydroxyacetone phosphate + NADH + H(+). It carries out the reaction sn-glycerol 1-phosphate + NADP(+) = dihydroxyacetone phosphate + NADPH + H(+). The protein operates within membrane lipid metabolism; glycerophospholipid metabolism. In terms of biological role, catalyzes the NAD(P)H-dependent reduction of dihydroxyacetonephosphate (DHAP or glycerone phosphate) to glycerol 1-phosphate (G1P). The G1P thus generated is used as the glycerophosphate backbone of phospholipids in the cellular membranes of Archaea. The protein is Glycerol-1-phosphate dehydrogenase [NAD(P)+] of Methanoregula boonei (strain DSM 21154 / JCM 14090 / 6A8).